A 230-amino-acid chain; its full sequence is UPF0173 metal-dependent hydrolase Mbar_A3716 (230 aa).

This sequence belongs to the UPF0173 family.

This Methanosarcina barkeri (strain Fusaro / DSM 804) protein is UPF0173 metal-dependent hydrolase Mbar_A3716.